Reading from the N-terminus, the 464-residue chain is tRNA modification GTPase MnmE (464 aa).

(6S)-5-formyl-5,6,7,8-tetrahydrofolate contacts are provided by Arg28, Glu90, and Arg129. The region spanning 226 to 385 (GLATAIVGRP…LEEKIAELFF (160 aa)) is the TrmE-type G domain. Asn236 serves as a coordination point for K(+). GTP-binding positions include 236–241 (NVGKSS), 255–261 (TDIAGTT), and 280–283 (DTAG). Ser240 provides a ligand contact to Mg(2+). Positions 255, 257, and 260 each coordinate K(+). Thr261 serves as a coordination point for Mg(2+). Lys464 is a (6S)-5-formyl-5,6,7,8-tetrahydrofolate binding site.

The protein belongs to the TRAFAC class TrmE-Era-EngA-EngB-Septin-like GTPase superfamily. TrmE GTPase family. As to quaternary structure, homodimer. Heterotetramer of two MnmE and two MnmG subunits. The cofactor is K(+).

The protein localises to the cytoplasm. Exhibits a very high intrinsic GTPase hydrolysis rate. Involved in the addition of a carboxymethylaminomethyl (cmnm) group at the wobble position (U34) of certain tRNAs, forming tRNA-cmnm(5)s(2)U34. The chain is tRNA modification GTPase MnmE from Ligilactobacillus salivarius (strain UCC118) (Lactobacillus salivarius).